A 369-amino-acid polypeptide reads, in one-letter code: MTTRPFVQVFDAQNKVVGKVKLPNVLTTPIRPDLVNFVHTNLNKNARQAYGAAPYAGEQTSAESWGTGRAVARIPRVPGSGTHRSGQGAFGNMCRGGRMYGPNKTWRRWNRKVNVNQKRYAVVSALAASAVPALVMARGHRINGINEVPLVIANESVDTLQKTKAAVELLKKINAYADVTKVIDSKHIRAGAGKARNRRYKVRKGPLVVVSGKTTVSQALRNIPGVEVANVSRLNLLKLAPGGHLGRFIIWTKSAFEQLDSTFGTFAKSSAQKKGYTLPRPMIANADIVRLVNSDEIQAAVRASKVVVKRPTAPVRRSNPLKNLRAMIKLNPAAVSTRRTQVKSLKSKGIKVSKKNQLRAKLVAATFNQ.

Residue Thr2 is modified to N-acetylthreonine.

The protein belongs to the universal ribosomal protein uL4 family.

The sequence is that of Large ribosomal subunit protein uL4 (rpl4) from Dictyostelium discoideum (Social amoeba).